We begin with the raw amino-acid sequence, 490 residues long: MDLLVDELFADMDADGASPPPPRPAGGPKNTPAAPPLYATGRLSQAQLMPSPPMPVPPAALFNRLLDDLGFSAGPALCTMLDTWNEDLFSALPTNADLYRECKFLSTLPSDVVEWGDAYVPERAQIDIRAHGDVAFPTLPATRDGLGLYYEALSRFFHAELRAREESYRTVLANFCSALYRYLRASVRQLHRQAHMRGRDRDLGEMLRATIADRYYRETARLARVLFLHLYLFLTREILWAAYAEQMMRPDLFDCLCCDLESWRQLAGLFQPFMFVNGALTVRGVPIEARRLRELNHIREHLNLPLVRSAATEEPGAPLTTPPTLHGNQARASGYFMVLIRAKLDSYSSFTTSPSEAVMREHAYSRARTKNNYGSTIEGLLDLPDDDAPEEAGLAAPRLSFLPAGHTRRLSTAPPTDVSLGDELHLDGEDVAMAHADALDDFDLDMLGDGDSPGPGFTPHDSAPYGALDMADFEFEQMFTDALGIDEYGG.

Residues 12 to 37 form a disordered region; that stretch reads MDADGASPPPPRPAGGPKNTPAAPPL. Phosphoserine is present on residues Ser18, Ser353, Ser411, and Ser452. Positions 411 to 490 are transcriptional activation; it reads STAPPTDVSL…DALGIDEYGG (80 aa).

The protein belongs to the herpesviridae tegument protein VP16 protein family. Interacts with VP22. Interacts with gH (via C-terminus). Interacts with the virion host shutoff protein (vhs). Interacts with VP11/12. Associates with the VP16-induced complex; binding to host HCFC1 activates VP16 for association with the octamer motif-binding host protein POU2F1, to form a multiprotein-DNA complex responsible for activating transcription of the viral immediate early genes.

The protein localises to the virion tegument. It localises to the host nucleus. Transcriptional activator of immediate-early (IE) gene products (alpha genes). Acts as a key activator of lytic infection by initiating the lytic program through the assembly of the transcriptional regulatory VP16-induced complex composed of VP16 and two cellular factors, HCFC1 and POU2F 1. VP16-induced complex represents a regulatory switch: when it is on, it promotes IE-gene expression and thus lytic infection, and when it is off, it limits IE-gene transcription favoring latent infection. Functionally, may play a role in the aggregation of tegument proteins around nucleocapsids during virus morphogenesis. The chain is Tegument protein VP16 from Homo sapiens (Human).